We begin with the raw amino-acid sequence, 529 residues long: DNA-binding protein (529 aa).

A compositionally biased stretch (basic and acidic residues) spans 1 to 17; the sequence is MASREEEQRETTPERGR. 2 disordered regions span residues 1-107 and 125-166; these read MASR…IVDS and PVLI…AESE. Basic residues predominate over residues 129 to 139; it reads KHGKGGKRTVR. Acidic residues predominate over residues 155-165; it reads EEEEEPSEAES. Position 195 is a phosphotyrosine; by host (Y195). 2 residues coordinate Zn(2+): C284 and H286. The interval 297-331 is flexible loop; it reads IEMDVTSENGQRALKEQSSKAKIVKNRWGRNVVQI. Zn(2+)-binding residues include C339, C355, C396, C398, C450, and C467. A C-terminal arm, DBP binding region spans residues 513–529; it reads VSLPVAHSDARQNPFDF.

This sequence belongs to the adenoviridae E2A DNA-binding protein family. As to quaternary structure, homomultimerizes on viral ssDNA bound to pTP. Forms a initiation complex with viral polymerase, pTP and hosts NFIA and POU2F1/OCT1. Interacts with host SRCAP.

It is found in the host nucleus. Functionally, plays a role in the elongation phase of viral strand displacement replication by unwinding the template in an ATP-independent fashion, employing its capacity to form multimers. Also enhances the rate of initiation. Released from template upon second strand synthesis. Assembles in complex with viral pTP, viral pol, host NFIA and host POU2F1/OCT1 on viral origin of replication. Covers the whole ssDNA genome during synthesis. The complementary strand synthesis induces its relese from DNA template. May inhibit cellular transcription mediated by the interaction between host SRCAP and CBP. The polypeptide is DNA-binding protein (Human adenovirus C serotype 5 (HAdV-5)).